Reading from the N-terminus, the 690-residue chain is Protein-glutamine gamma-glutamyltransferase 2 (690 aa).

N-acetylalanine is present on Ala-2. Cystine bridges form between Cys-230-Cys-370 and Cys-370-Cys-371. Catalysis depends on residues Cys-277, His-335, and Asp-358. Ca(2+) is bound by residues Asn-398, Asp-400, Glu-436, Glu-446, and Glu-451. Position 467 is an N6-acetyllysine (Lys-467). 479–486 (RIRVGQNM) contacts GTP. Glu-542 provides a ligand contact to Ca(2+). 583–586 (RDIY) contributes to the GTP binding site. Gln-636 participates in a covalent cross-link: Isoglutamyl lysine isopeptide (Gln-Lys) (interchain with K-?).

This sequence belongs to the transglutaminase superfamily. Transglutaminase family. In terms of assembly, monomer. Interacts with phospholipase C; promoting alpha-1 adrenergic receptor signaling. Interacts with PLCD1. Ca(2+) is required as a cofactor. Post-translationally, disulfide bond formation inactivates the calcium-dependent acyltransferase activity. Cys-370 can form disulfide bonds with both Cys-230 and Cys-371: formation of a disulfide bond between Cys-230 and Cys-370 facilitates formation of the disulfide between Cys-370 and Cys-371, which promotes inactivation of the acyltransferase activity. May also form interchain disulfids between Cys-230 and Cys-370. Ca(2+) protects against disulfide bond formation and inactivation. In terms of processing, auto-transglutaminated: Forms covalent cross-links mediated by transglutaminase between Gln-636 and the epsilon-amino group of a lysine residue of itself or HMGB1, forming homopolymers and heteropolymers, respectively. S-nitrosylated, leading to inactivation of the acyltransferase activity.

The protein localises to the cytoplasm. Its subcellular location is the cytosol. It is found in the nucleus. The protein resides in the chromosome. It localises to the secreted. The protein localises to the extracellular space. Its subcellular location is the extracellular matrix. It is found in the cell membrane. The protein resides in the mitochondrion. The catalysed reaction is L-glutaminyl-[protein] + L-lysyl-[protein] = [protein]-L-lysyl-N(6)-5-L-glutamyl-[protein] + NH4(+). It catalyses the reaction L-glutaminyl-[protein] + serotonin = 5-serotonyl-L-glutamyl-[protein] + NH4(+). The enzyme catalyses L-glutaminyl-[protein] + dopamine = 5-dopaminyl-L-glutamyl-[protein] + NH4(+). It carries out the reaction L-glutaminyl-[protein] + histamine = 5-histaminyl-L-glutamyl-[protein] + NH4(+). The catalysed reaction is L-glutaminyl-[protein] + (R)-noradrenaline = 5-(R)-noradrenalinyl-L-glutamyl-[protein] + NH4(+). It catalyses the reaction L-glutaminyl-[protein] + H2O = L-glutamyl-[protein] + NH4(+). Its activity is regulated as follows. Acyltransferase activity is regulated by the binding of GTP and Ca(2+): inactivated by GTP, which stabilizes its closed structure, thereby obstructing the accessibility of substrates to the active sites. In contrast, Ca(2+) acts as a cofactor by inducing conformational change to the active open form. In absence of Ca(2+), Mg(2+) may bind Ca(2+)-binding sites, promoting GTP-binding and subsequent inhibition of the acyltransferase activity. Extracellularly reduced and activated by CLIC3. Calcium-dependent acyltransferase that catalyzes the formation of covalent bonds between peptide-bound glutamine and various primary amines, such as gamma-amino group of peptide-bound lysine, or mono- and polyamines, thereby producing cross-linked or aminated proteins, respectively. Involved in many biological processes, such as bone development, angiogenesis, wound healing, cellular differentiation, chromatin modification and apoptosis. Acts as a protein-glutamine gamma-glutamyltransferase by mediating the cross-linking of proteins, such as ACO2, HSPB6, FN1, HMGB1, RAP1GDS1, SLC25A4/ANT1, SPP1 and WDR54. Under physiological conditions, the protein cross-linking activity is inhibited by GTP; inhibition is relieved by Ca(2+) in response to various stresses. When secreted, catalyzes cross-linking of proteins of the extracellular matrix, such as FN1 and SPP1 resulting in the formation of scaffolds. Plays a key role during apoptosis, both by (1) promoting the cross-linking of cytoskeletal proteins resulting in condensation of the cytoplasm, and by (2) mediating cross-linking proteins of the extracellular matrix, resulting in the irreversible formation of scaffolds that stabilize the integrity of the dying cells before their clearance by phagocytosis, thereby preventing the leakage of harmful intracellular components. In addition to protein cross-linking, can use different monoamine substrates to catalyze a vast array of protein post-translational modifications: mediates aminylation of serotonin, dopamine, noradrenaline or histamine into glutamine residues of target proteins to generate protein serotonylation, dopaminylation, noradrenalinylation or histaminylation, respectively. Mediates protein serotonylation of small GTPases during activation and aggregation of platelets, leading to constitutive activation of these GTPases. Plays a key role in chromatin organization by mediating serotonylation and dopaminylation of histone H3. Catalyzes serotonylation of 'Gln-5' of histone H3 (H3Q5ser) during serotonergic neuron differentiation, thereby facilitating transcription. Acts as a mediator of neurotransmission-independent role of nuclear dopamine in ventral tegmental area (VTA) neurons: catalyzes dopaminylation of 'Gln-5' of histone H3 (H3Q5dop), thereby regulating relapse-related transcriptional plasticity in the reward system. Regulates vein remodeling by mediating serotonylation and subsequent inactivation of ATP2A2/SERCA2. Also acts as a protein deamidase by mediating the side chain deamidation of specific glutamine residues of proteins to glutamate. Catalyzes specific deamidation of protein gliadin, a component of wheat gluten in the diet. May also act as an isopeptidase cleaving the previously formed cross-links. Also able to participate in signaling pathways independently of its acyltransferase activity: acts as a signal transducer in alpha-1 adrenergic receptor-mediated stimulation of phospholipase C-delta (PLCD) activity and is required for coupling alpha-1 adrenergic agonists to the stimulation of phosphoinositide lipid metabolism. This Cavia cutleri (Guinea pig) protein is Protein-glutamine gamma-glutamyltransferase 2.